We begin with the raw amino-acid sequence, 1321 residues long: C-Jun-amino-terminal kinase-interacting protein 4 (1321 aa).

Met-1 carries the post-translational modification N-acetylmethionine. Residues 7 to 95 enclose the RH1 domain; it reads VVYQEEPGGS…ITQYEREKAL (89 aa). A coiled-coil region spans residues 66 to 166; that stretch reads AQDQEHQVEL…NALHQRHTEM (101 aa). 5 positions are modified to phosphoserine: Ser-109, Ser-183, Ser-185, Ser-194, and Ser-203. The disordered stretch occupies residues 203–308; the sequence is SLGIFPLPAG…EGFVKGTDTS (106 aa). The residue at position 217 (Thr-217) is a Phosphothreonine. Over residues 236 to 248 the composition is skewed to polar residues; it reads ELSQPRSHTSLKV. Ser-238, Ser-251, Ser-265, Ser-268, and Ser-272 each carry phosphoserine. Residues 266–285 are compositionally biased toward polar residues; the sequence is DISQGGSKATTPASTANSDV. Thr-292 is modified (phosphothreonine). 4 positions are modified to phosphoserine: Ser-311, Ser-329, Ser-332, and Ser-347. Residues 322 to 332 show a composition bias toward polar residues; the sequence is AQETRNVSTES. The tract at residues 322 to 341 is disordered; the sequence is AQETRNVSTESGENEEKSEV. 3 positions are modified to phosphothreonine: Thr-348, Thr-365, and Thr-418. Residues 408–534 adopt a coiled-coil conformation; the sequence is REVENLILEN…LQEAVRWTEM (127 aa). Residues 473 to 489 show a composition bias toward basic and acidic residues; it reads LRKARAEAEDARQKAKD. Disordered regions lie at residues 473–500 and 563–600; these read LRKA…TAQR and SSNA…SQLP. The RH2 domain occupies 500-604; that stretch reads RKRFTRVEMA…TLSQLPGDKS (105 aa). Residue Thr-586 is modified to Phosphothreonine. Ser-588 carries the post-translational modification Phosphoserine. Position 595 is a phosphothreonine (Thr-595). A phosphoserine mark is found at Ser-705, Ser-728, Ser-730, Ser-732, and Ser-733. The stretch at 724-758 forms a coiled coil; sequence SKQRSASQSSLDKLDQELKEQQKEFKNQEELSSQV. Residues 853–883 are disordered; it reads TGAATSPSTNGASPVIEKPPEMETENSEVDE. Residues 855 to 864 show a composition bias toward polar residues; the sequence is AATSPSTNGA. A compositionally biased stretch (acidic residues) spans 874–883; the sequence is METENSEVDE. The residue at position 1188 (Ser-1188) is a Phosphoserine. The interval 1239–1267 is disordered; it reads PQSSSGGADLTADKAGSSAQEPSSQTPLK. Residues 1255–1266 are compositionally biased toward polar residues; the sequence is SSAQEPSSQTPL. Thr-1264 carries the phosphothreonine modification.

Belongs to the JIP scaffold family. As to quaternary structure, homodimer. The homodimer interacts with ARF6, forming a heterotetramer. Homooligomer. Interacts with MAX, MAPK8, MAPK14, MAP3K3, MYC, and MAP2K4. Interacts with KNS2. Interaction with KNS2 is important in the formation of ternary complex with MAPK8. Interacts with PIP4P1. Interacts with PIKFYVE. Phosphorylated by MAPK8 and MAPK14. Highly expressed in brain, kidney, liver, heart.

The protein localises to the cytoplasm. It is found in the perinuclear region. Its subcellular location is the lysosome membrane. In terms of biological role, the JNK-interacting protein (JIP) group of scaffold proteins selectively mediates JNK signaling by aggregating specific components of the MAPK cascade to form a functional JNK signaling module. Regulates lysosomal positioning by acting as an adapter protein which links PIP4P1-positive lysosomes to the dynein-dynactin complex. Assists PIKFYVE selective functionality in microtubule-based endosome-to-TGN trafficking. The chain is C-Jun-amino-terminal kinase-interacting protein 4 from Mus musculus (Mouse).